A 259-amino-acid chain; its full sequence is Putative zinc metalloprotease Rip2 (259 aa).

A run of 2 helical transmembrane segments spans residues 14-34 (PIFL…WLAG) and 39-59 (PLAY…SLCL). H60 lines the Zn(2+) pocket. The active site involves E61. Position 64 (H64) interacts with Zn(2+). The next 4 helical transmembrane spans lie at 97–117 (GLPM…AVYV), 128–148 (TLVS…LLAA), 156–176 (IHAV…TALV), and 215–235 (LVLF…YWLF).

Belongs to the peptidase M50B family. Zn(2+) is required as a cofactor.

Its subcellular location is the cell membrane. This is Putative zinc metalloprotease Rip2 (rip2) from Mycobacterium tuberculosis (strain ATCC 35801 / TMC 107 / Erdman).